The primary structure comprises 222 residues: Sugar fermentation stimulation protein homolog (222 aa).

Belongs to the SfsA family.

In Thermoplasma acidophilum (strain ATCC 25905 / DSM 1728 / JCM 9062 / NBRC 15155 / AMRC-C165), this protein is Sugar fermentation stimulation protein homolog.